The primary structure comprises 574 residues: 3-hydroxy-3-methylglutaryl-coenzyme A reductase 3 (574 aa).

The tract at residues 1-30 (MDVRRRPVKPLYPSEHISSGEPLKPHNQDS) is disordered. A helical membrane pass occupies residues 41 to 61 (PLYLTNGLFFTMFFSVMYFLL). A glycan (N-linked (GlcNAc...) asparagine) is linked at Asn-78. The chain crosses the membrane as a helical span at residues 83 to 103 (VAMVSLIASVIYLLGFFGIGF). The interval 104–161 (VQSFVSKGNNDSWDVEDESPEQFIDRTVTPPPVRRNIPMKSVPVAEKTAQIITPFSSE) is linker. N-linked (GlcNAc...) asparagine glycosylation occurs at Asn-113. The segment at 162–574 (DDEVVIKSVV…YNRSCKDVTK (413 aa)) is catalytic. Catalysis depends on Glu-256, which acts as the Charge relay system. Asn-320 carries an N-linked (GlcNAc...) asparagine glycan. Lys-388 serves as the catalytic Charge relay system. Asn-433 carries an N-linked (GlcNAc...) asparagine glycan. Asp-464 functions as the Charge relay system in the catalytic mechanism. The active-site Proton donor is the His-562. Asn-566 carries an N-linked (GlcNAc...) asparagine glycan.

Belongs to the HMG-CoA reductase family. Expressed in mature petals and anthers.

Its subcellular location is the endoplasmic reticulum membrane. The catalysed reaction is (R)-mevalonate + 2 NADP(+) + CoA = (3S)-3-hydroxy-3-methylglutaryl-CoA + 2 NADPH + 2 H(+). Its pathway is metabolic intermediate biosynthesis; (R)-mevalonate biosynthesis; (R)-mevalonate from acetyl-CoA: step 3/3. In terms of biological role, catalyzes the synthesis of mevalonate. The specific precursor of all isoprenoid compounds present in plants. This is 3-hydroxy-3-methylglutaryl-coenzyme A reductase 3 (HMG3) from Solanum tuberosum (Potato).